We begin with the raw amino-acid sequence, 1050 residues long: uncharacterized protein (1050 aa).

Residues 1 to 83 lie on the Cytoplasmic side of the membrane; that stretch reads MARLLTKSSQ…AVKLGTFEGC (83 aa). 2 positions are modified to phosphoserine: serine 9 and serine 60. Threonine 64 is modified (phosphothreonine). The helical transmembrane segment at 84–104 threads the bilayer; that stretch reads FIPTTLNVLSILLYLRFPWII. Residues 105-112 lie on the Extracellular side of the membrane; it reads GEAGVLKT. The helical transmembrane segment at 113–133 threads the bilayer; it reads LLMLFISYAVGIFTSLSISAI. Residues 134–146 lie on the Cytoplasmic side of the membrane; sequence CTNGMVRGGGAYY. The chain crosses the membrane as a helical span at residues 147-169; the sequence is AVSRSIGPELGGSIGLIFYVGQI. Topologically, residues 170-202 are extracellular; sequence LNTGMNISGFVEPIISIFGKESGTISQFLPEGY. N-linked (GlcNAc...) asparagine glycosylation occurs at asparagine 175. The helical transmembrane segment at 203-223 threads the bilayer; it reads WWVFLYTTCVLAMCCILCCLG. Topologically, residues 224 to 232 are cytoplasmic; it reads SAIFAKASN. A helical membrane pass occupies residues 233–253; sequence ALFVVIILSTISIPISSIFVH. At 254-295 the chain is on the extracellular side; the sequence is PFKDPSLLVHFTGLKWSTLMKNLASAYTENEKGTGYESFKST. Serine 270 is subject to Phosphoserine. Threonine 271 is subject to Phosphothreonine. A helical membrane pass occupies residues 296-316; it reads FGVFFPATAGLLAGASMSGDL. The Cytoplasmic segment spans residues 317-334; it reads KAPSRSIPKGTISSQATT. A helical membrane pass occupies residues 335 to 355; it reads FLLYLLVILCVGASVTRTGLL. Residues 356-368 are Extracellular-facing; the sequence is LDMDVMEHISLHP. A helical transmembrane segment spans residues 369 to 389; sequence LFIISGILSSGAFSSFMGIFG. At 390–417 the chain is on the cytoplasmic side; that stretch reads AAKLLQAIARDDLIPGMFFFAKGSSYDD. A helical membrane pass occupies residues 418-438; the sequence is IPYVAIGVTYLITQISLFWDI. At 439-442 the chain is on the extracellular side; it reads NMLS. The chain crosses the membrane as a helical span at residues 443 to 463; that stretch reads SMITMTFLLTFGFINLSCFLL. Residues 464-480 are Cytoplasmic-facing; that stretch reads RISSTPNFRPTFRYFNR. Residues 481–497 traverse the membrane as a helical segment; it reads RTTLVGTILSFGVMFYV. The Extracellular portion of the chain corresponds to 498–499; sequence DR. A helical membrane pass occupies residues 500–520; that stretch reads LNAFISFLIAGILVVVIYFTC. Topologically, residues 521 to 1050 are cytoplasmic; that stretch reads PPKNWGDVSQ…SKSLTITTAL (530 aa). Serine 901 carries the phosphoserine modification. The disordered stretch occupies residues 915–943; that stretch reads ETESSFGNRSLSPKQENRRTYSDSTIESS. Polar residues predominate over residues 916-928; sequence TESSFGNRSLSPK. The residue at position 936 (serine 936) is a Phosphoserine. Threonine 939 is modified (phosphothreonine).

Belongs to the SLC12A transporter family.

It is found in the membrane. This is an uncharacterized protein from Schizosaccharomyces pombe (strain 972 / ATCC 24843) (Fission yeast).